A 461-amino-acid polypeptide reads, in one-letter code: Calcitonin gene-related peptide type 1 receptor (461 aa).

An N-terminal signal peptide occupies residues 1 to 22 (MEKKCTLYFLVLLPFFMILVTA). Residues 23-139 (ELEESPEDSI…NTHEKVKTAL (117 aa)) are Extracellular-facing. 3 disulfide bridges follow: C48/C74, C65/C105, and C88/C127. N66, N118, and N123 each carry an N-linked (GlcNAc...) asparagine glycan. A helical membrane pass occupies residues 140 to 164 (NLFYLTIIGHGLSIASLLISLGIFF). Topologically, residues 165-175 (YFKSLSCQRIT) are cytoplasmic. A helical transmembrane segment spans residues 176–198 (LHKNLFFSFVCNSVVTIIHLTAV). Over 199–209 (ANNQALVATNP) the chain is Extracellular. The helical transmembrane segment at 210–238 (VSCKVSQFIHLYLMGCNYFWMLCEGIYLH) threads the bilayer. Residues 239-252 (TLIVVAVFAEKQHL) lie on the Cytoplasmic side of the membrane. Residues 253–273 (MWYYFLGWGFPLIPACIHAIA) traverse the membrane as a helical segment. Over 274-289 (RSLYYNDNCWISSDTH) the chain is Extracellular. Residues 288-289 (TH) form a required for RAMP3 interaction region. The chain crosses the membrane as a helical span at residues 290-314 (LLYIIHGPICAALLVNLFFLLNIVR). Topologically, residues 315–329 (VLITKLKVTHQAESN) are cytoplasmic. A helical membrane pass occupies residues 330–351 (LYMKAVRATLILVPLLGIEFVL). The Extracellular portion of the chain corresponds to 352–366 (IPWRPEGKIAEEVYD). Residues 367–387 (YIMHILMHFQGLLVSTIFCFF) traverse the membrane as a helical segment. Phosphoserine occurs at positions 420 and 445.

This sequence belongs to the G-protein coupled receptor 2 family. As to quaternary structure, heterodimer of CALCRL and RAMP1; the receptor complex functions as CGRP receptor. Heterodimer of CALCRL and RAMP2 or CALCRL and RAMP3; the complexes function as adrenomedullin receptor. As to expression, predominantly expressed in the lung and heart.

The protein resides in the cell membrane. In terms of biological role, g protein-coupled receptor which specificity is determined by its interaction with receptor-activity-modifying proteins (RAMPs). Together with RAMP1, form the receptor complex for calcitonin-gene-related peptides CALCA/CGRP1 and CALCB/CGRP2. Together with RAMP2 or RAMP3, function as receptor complexes for adrenomedullin (ADM and ADM2). Ligand binding causes a conformation change that triggers signaling via guanine nucleotide-binding proteins (G proteins) and modulates the activity of downstream effectors. Activates cAMP-dependent pathway. This chain is Calcitonin gene-related peptide type 1 receptor, found in Homo sapiens (Human).